A 155-amino-acid chain; its full sequence is Myosin light chain alkali (155 aa).

2 EF-hand domains span residues 7 to 41 (REIE…LNLN) and 80 to 115 (GCYE…LGES).

In terms of assembly, myosin is a hexamer of 2 heavy chains and 4 light chains.

In Drosophila pseudoobscura pseudoobscura (Fruit fly), this protein is Myosin light chain alkali (Mlc1).